A 355-amino-acid polypeptide reads, in one-letter code: 3-dehydroquinate synthase (355 aa).

NAD(+) is bound by residues 105–109 (GVVGD), 129–130 (TS), Lys142, Lys151, and 169–172 (TLKT). Zn(2+) is bound by residues Glu184, His246, and His263.

It belongs to the sugar phosphate cyclases superfamily. Dehydroquinate synthase family. Requires Co(2+) as cofactor. Zn(2+) is required as a cofactor. The cofactor is NAD(+).

The protein resides in the cytoplasm. It carries out the reaction 7-phospho-2-dehydro-3-deoxy-D-arabino-heptonate = 3-dehydroquinate + phosphate. It participates in metabolic intermediate biosynthesis; chorismate biosynthesis; chorismate from D-erythrose 4-phosphate and phosphoenolpyruvate: step 2/7. In terms of biological role, catalyzes the conversion of 3-deoxy-D-arabino-heptulosonate 7-phosphate (DAHP) to dehydroquinate (DHQ). This Streptococcus agalactiae serotype Ia (strain ATCC 27591 / A909 / CDC SS700) protein is 3-dehydroquinate synthase.